The chain runs to 254 residues: O-antigen biosynthesis glycosyltransferase WbnJ (254 aa).

Belongs to the glycosyltransferase 2 family.

The enzyme catalyses an N-acetyl-alpha-D-galactosaminyl derivative + UDP-alpha-D-galactose = a beta-D-galactosyl-(1-&gt;3)-N-acetyl-alpha-D-galactosaminyl derivative + UDP + H(+). The catalysed reaction is alpha-D-GalNAc-(1-&gt;3)-alpha-D-GalNAc-di-trans,octa-cis-undecaprenyl diphosphate + UDP-alpha-D-galactose = beta-D-Gal-(1-&gt;3)-alpha-D-GalNAc-(1-&gt;3)-alpha-D-GalNAc-di-trans,octa-cis-undecaprenyl diphosphate + UDP + H(+). Its pathway is bacterial outer membrane biogenesis; LPS O-antigen biosynthesis. Involved in the assembly of the O-repeating unit during O-antigen biosynthesis. This Escherichia coli protein is O-antigen biosynthesis glycosyltransferase WbnJ.